We begin with the raw amino-acid sequence, 456 residues long: Bifunctional protein GlmU (456 aa).

Residues 1–229 (MLNNAMSVVI…LSEVEGVNNR (229 aa)) form a pyrophosphorylase region. UDP-N-acetyl-alpha-D-glucosamine-binding positions include 11-14 (LAAG), K25, Q76, 81-82 (GT), 103-105 (YGD), G140, E154, N169, and N227. D105 is a Mg(2+) binding site. N227 provides a ligand contact to Mg(2+). A linker region spans residues 230–250 (LQLSRLERVYQSEQAEKLLLA). The interval 251-456 (GVMLRDPARF…EGWRRPVKKK (206 aa)) is N-acetyltransferase. Positions 333 and 351 each coordinate UDP-N-acetyl-alpha-D-glucosamine. H363 (proton acceptor) is an active-site residue. The UDP-N-acetyl-alpha-D-glucosamine site is built by Y366 and N377. Acetyl-CoA is bound by residues A380, 386–387 (NY), S405, A423, and R440.

The protein in the N-terminal section; belongs to the N-acetylglucosamine-1-phosphate uridyltransferase family. In the C-terminal section; belongs to the transferase hexapeptide repeat family. In terms of assembly, homotrimer. Mg(2+) serves as cofactor.

The protein localises to the cytoplasm. The enzyme catalyses alpha-D-glucosamine 1-phosphate + acetyl-CoA = N-acetyl-alpha-D-glucosamine 1-phosphate + CoA + H(+). The catalysed reaction is N-acetyl-alpha-D-glucosamine 1-phosphate + UTP + H(+) = UDP-N-acetyl-alpha-D-glucosamine + diphosphate. It functions in the pathway nucleotide-sugar biosynthesis; UDP-N-acetyl-alpha-D-glucosamine biosynthesis; N-acetyl-alpha-D-glucosamine 1-phosphate from alpha-D-glucosamine 6-phosphate (route II): step 2/2. The protein operates within nucleotide-sugar biosynthesis; UDP-N-acetyl-alpha-D-glucosamine biosynthesis; UDP-N-acetyl-alpha-D-glucosamine from N-acetyl-alpha-D-glucosamine 1-phosphate: step 1/1. It participates in bacterial outer membrane biogenesis; LPS lipid A biosynthesis. Functionally, catalyzes the last two sequential reactions in the de novo biosynthetic pathway for UDP-N-acetylglucosamine (UDP-GlcNAc). The C-terminal domain catalyzes the transfer of acetyl group from acetyl coenzyme A to glucosamine-1-phosphate (GlcN-1-P) to produce N-acetylglucosamine-1-phosphate (GlcNAc-1-P), which is converted into UDP-GlcNAc by the transfer of uridine 5-monophosphate (from uridine 5-triphosphate), a reaction catalyzed by the N-terminal domain. This chain is Bifunctional protein GlmU, found in Escherichia coli O45:K1 (strain S88 / ExPEC).